A 668-amino-acid polypeptide reads, in one-letter code: tRNA 5-methylaminomethyl-2-thiouridine biosynthesis bifunctional protein MnmC (668 aa).

The tRNA (mnm(5)s(2)U34)-methyltransferase stretch occupies residues 1-245; sequence MKHYAIQPAN…KREMLCGVME (245 aa). The FAD-dependent cmnm(5)s(2)U34 oxidoreductase stretch occupies residues 270-668; the sequence is IGGGIASALL…LLKGKAVKAG (399 aa).

The protein in the N-terminal section; belongs to the methyltransferase superfamily. tRNA (mnm(5)s(2)U34)-methyltransferase family. In the C-terminal section; belongs to the DAO family. The cofactor is FAD.

It is found in the cytoplasm. The catalysed reaction is 5-aminomethyl-2-thiouridine(34) in tRNA + S-adenosyl-L-methionine = 5-methylaminomethyl-2-thiouridine(34) in tRNA + S-adenosyl-L-homocysteine + H(+). Its function is as follows. Catalyzes the last two steps in the biosynthesis of 5-methylaminomethyl-2-thiouridine (mnm(5)s(2)U) at the wobble position (U34) in tRNA. Catalyzes the FAD-dependent demodification of cmnm(5)s(2)U34 to nm(5)s(2)U34, followed by the transfer of a methyl group from S-adenosyl-L-methionine to nm(5)s(2)U34, to form mnm(5)s(2)U34. This is tRNA 5-methylaminomethyl-2-thiouridine biosynthesis bifunctional protein MnmC from Escherichia coli O139:H28 (strain E24377A / ETEC).